The chain runs to 100 residues: Aspartyl/glutamyl-tRNA(Asn/Gln) amidotransferase subunit C (100 aa).

This sequence belongs to the GatC family. Heterotrimer of A, B and C subunits.

It carries out the reaction L-glutamyl-tRNA(Gln) + L-glutamine + ATP + H2O = L-glutaminyl-tRNA(Gln) + L-glutamate + ADP + phosphate + H(+). The enzyme catalyses L-aspartyl-tRNA(Asn) + L-glutamine + ATP + H2O = L-asparaginyl-tRNA(Asn) + L-glutamate + ADP + phosphate + 2 H(+). Its function is as follows. Allows the formation of correctly charged Asn-tRNA(Asn) or Gln-tRNA(Gln) through the transamidation of misacylated Asp-tRNA(Asn) or Glu-tRNA(Gln) in organisms which lack either or both of asparaginyl-tRNA or glutaminyl-tRNA synthetases. The reaction takes place in the presence of glutamine and ATP through an activated phospho-Asp-tRNA(Asn) or phospho-Glu-tRNA(Gln). This Streptococcus uberis (strain ATCC BAA-854 / 0140J) protein is Aspartyl/glutamyl-tRNA(Asn/Gln) amidotransferase subunit C.